We begin with the raw amino-acid sequence, 162 residues long: V-type proton ATPase subunit c' (162 aa).

Over methionine 1–serine 11 the chain is Lumenal. Residues phenylalanine 12 to glycine 32 form a helical membrane-spanning segment. Topologically, residues threonine 33–serine 54 are cytoplasmic. The chain crosses the membrane as a helical span at residues leucine 55 to isoleucine 75. Residues alanine 76–histidine 93 are Lumenal-facing. The chain crosses the membrane as a helical span at residues leucine 94–valine 114. The Cytoplasmic portion of the chain corresponds to glycine 115–methionine 132. Residues valine 133–leucine 153 traverse the membrane as a helical segment. Topologically, residues glutamine 154–tyrosine 162 are lumenal.

Belongs to the V-ATPase proteolipid subunit family. As to quaternary structure, V-ATPase is a heteromultimeric enzyme composed of a peripheral catalytic V1 complex (components A to H) attached to an integral membrane V0 proton pore complex (components: a, c, c', c'', d, e, f and VOA1). The decameric c-ring forms the proton-conducting pore, and is composed of eight proteolipid subunits c, one subunit c' and one subunit c''.

It localises to the vacuole membrane. Proton-conducting pore forming subunit of the V0 complex of vacuolar(H+)-ATPase (V-ATPase), a multisubunit enzyme composed of a peripheral complex (V1) that hydrolyzes ATP and a membrane integral complex (V0) that translocates protons. V-ATPase is responsible for acidifying and maintaining the pH of intracellular compartments. The protein is V-type proton ATPase subunit c' of Schizosaccharomyces pombe (strain 972 / ATCC 24843) (Fission yeast).